A 427-amino-acid polypeptide reads, in one-letter code: 3-phosphoshikimate 1-carboxyvinyltransferase (427 aa).

3 residues coordinate 3-phosphoshikimate: Lys23, Ser24, and Arg28. Lys23 is a binding site for phosphoenolpyruvate. Phosphoenolpyruvate contacts are provided by Gly97 and Arg125. 3-phosphoshikimate-binding residues include Ser170, Ser171, Gln172, Ser198, Asp314, Asn337, and Lys341. Gln172 serves as a coordination point for phosphoenolpyruvate. Asp314 (proton acceptor) is an active-site residue. Phosphoenolpyruvate contacts are provided by Arg345, Arg387, and Lys412.

The protein belongs to the EPSP synthase family. Monomer.

Its subcellular location is the cytoplasm. The enzyme catalyses 3-phosphoshikimate + phosphoenolpyruvate = 5-O-(1-carboxyvinyl)-3-phosphoshikimate + phosphate. It participates in metabolic intermediate biosynthesis; chorismate biosynthesis; chorismate from D-erythrose 4-phosphate and phosphoenolpyruvate: step 6/7. Its function is as follows. Catalyzes the transfer of the enolpyruvyl moiety of phosphoenolpyruvate (PEP) to the 5-hydroxyl of shikimate-3-phosphate (S3P) to produce enolpyruvyl shikimate-3-phosphate and inorganic phosphate. This is 3-phosphoshikimate 1-carboxyvinyltransferase from Buchnera aphidicola subsp. Baizongia pistaciae (strain Bp).